Reading from the N-terminus, the 223-residue chain is Holliday junction branch migration complex subunit RuvA (223 aa).

Positions 1 to 67 (MIGWLKGEKI…EDGSNLFGFI (67 aa)) are domain I. The domain II stretch occupies residues 68–146 (EKSERDLFRK…DFDLNNEFSP (79 aa)). A flexible linker region spans residues 147-157 (PTKLRPESAED). The interval 158-223 (LNEELLTEIK…FKQALITLNK (66 aa)) is domain III.

Belongs to the RuvA family. In terms of assembly, homotetramer. Forms an RuvA(8)-RuvB(12)-Holliday junction (HJ) complex. HJ DNA is sandwiched between 2 RuvA tetramers; dsDNA enters through RuvA and exits via RuvB. An RuvB hexamer assembles on each DNA strand where it exits the tetramer. Each RuvB hexamer is contacted by two RuvA subunits (via domain III) on 2 adjacent RuvB subunits; this complex drives branch migration. In the full resolvosome a probable DNA-RuvA(4)-RuvB(12)-RuvC(2) complex forms which resolves the HJ.

Its subcellular location is the cytoplasm. The RuvA-RuvB-RuvC complex processes Holliday junction (HJ) DNA during genetic recombination and DNA repair, while the RuvA-RuvB complex plays an important role in the rescue of blocked DNA replication forks via replication fork reversal (RFR). RuvA specifically binds to HJ cruciform DNA, conferring on it an open structure. The RuvB hexamer acts as an ATP-dependent pump, pulling dsDNA into and through the RuvAB complex. HJ branch migration allows RuvC to scan DNA until it finds its consensus sequence, where it cleaves and resolves the cruciform DNA. This chain is Holliday junction branch migration complex subunit RuvA, found in Prochlorococcus marinus (strain MIT 9211).